The primary structure comprises 1023 residues: Sodium/potassium-transporting ATPase subunit alpha-1 (1023 aa).

Positions 1-5 (MGLGK) are excised as a propeptide. Positions 1–11 (MGLGKGKDEYK) are enriched in basic and acidic residues. Positions 1–33 (MGLGKGKDEYKLAATSEDGGKKDKKAKAKKDMD) are disordered. Residues 6–87 (GKDEYKLAAT…NALTPPPTTP (82 aa)) lie on the Cytoplasmic side of the membrane. Residue Ser16 is modified to Phosphoserine; by PKC. Residues 82-84 (PPP) are interaction with phosphoinositide-3 kinase. A helical membrane pass occupies residues 88–108 (EWVKFCKQLFGGFSMLLWIGA). Over 109–131 (ILCFLAYGIQAASEDEPANDNLY) the chain is Extracellular. Residues 132–152 (LGIVLSAVVIITGCFSYYQEA) traverse the membrane as a helical segment. Over 153 to 288 (KSSKIMESFK…GGKTPIAIEI (136 aa)) the chain is Cytoplasmic. The tract at residues 216 to 237 (SSLTGESEPQTRSPDFSNENPL) is disordered. A helical membrane pass occupies residues 289-308 (EHFIHIITGVAVFLGVSFFI). At 309-320 (LSLILGYNWLEA) the chain is on the extracellular side. The chain crosses the membrane as a helical span at residues 321-338 (VIFLIGIIVANVPEGLLA). Residues 339 to 772 (TVTVCLTLTA…EEGRLIFDNL (434 aa)) lie on the Cytoplasmic side of the membrane. The active-site 4-aspartylphosphate intermediate is Asp376. Lys487 is a binding site for ATP. Mg(2+) is bound by residues Asp717 and Asp721. The chain crosses the membrane as a helical span at residues 773–792 (KKSIAYTLTSNIPEISPFLL). Over 793–802 (FIIANIPLPL) the chain is Extracellular. Residues 803-823 (GTVTILCIDLGTDMVPAISLA) form a helical membrane-spanning segment. Topologically, residues 824-843 (YEKAESDIMKRQPRNPKTDK) are cytoplasmic. Residues 844–866 (LVNERLISIAYGQIGMMQATAGF) form a helical membrane-spanning segment. Topologically, residues 867-918 (FTYFVILAENGFLPMDLIGVRVLWDDKYVNDLEDSYGQQWTYERRKIVEYSC) are extracellular. Residues 919 to 938 (HTAFFASIVIVQWADLIICK) traverse the membrane as a helical segment. Residues 939-951 (TRRNSIVQQGMTN) lie on the Cytoplasmic side of the membrane. A Phosphoserine; by PKA modification is found at Ser943. A helical membrane pass occupies residues 952–970 (RILIFGLFEETALAAFLSY). Topologically, residues 971–985 (CPGMDVALRMYPMKP) are extracellular. A helical transmembrane segment spans residues 986 to 1006 (LWWFCAFPYSLLIFLYDEARR). The Cytoplasmic segment spans residues 1007 to 1023 (YILRRNPGGWVEKETYY).

It belongs to the cation transport ATPase (P-type) (TC 3.A.3) family. Type IIC subfamily. As to quaternary structure, the sodium/potassium-transporting ATPase is composed of a catalytic alpha subunit, an auxiliary non-catalytic beta subunit and an additional regulatory subunit.

It localises to the cell membrane. The protein localises to the sarcolemma. The enzyme catalyses K(+)(out) + Na(+)(in) + ATP + H2O = K(+)(in) + Na(+)(out) + ADP + phosphate + H(+). This is the catalytic component of the active enzyme, which catalyzes the hydrolysis of ATP coupled with the exchange of sodium and potassium ions across the plasma membrane. This action creates the electrochemical gradient of sodium and potassium ions, providing the energy for active transport of various nutrients. The polypeptide is Sodium/potassium-transporting ATPase subunit alpha-1 (atp1a1) (Oreochromis mossambicus (Mozambique tilapia)).